The primary structure comprises 728 residues: Peroxisome biogenesis protein 5 (728 aa).

The disordered stretch occupies residues Met1 to Phe58. The interval Ala11–Asn97 is amphipathic helix 1 (AH1). Cys13 participates in a covalent cross-link: Glycyl cysteine thioester (Cys-Gly) (interchain with G-Cter in ubiquitin). 3 consecutive repeat copies span residues Trp240–Phe244, Trp257–Phe261, and Trp270–Phe274. Short sequence motifs (wxxxF/Y motif) lie at residues Trp240–Phe244, Trp257–Phe261, and Trp270–Phe274. Residues Ser288–Gly311 form an amphipathic helix 3 (AH3) region. 6 repeat units span residues Trp348–Tyr352, Trp362–Phe366, Trp378–Phe382, Trp396–Phe400, Trp408–Phe412, and Trp425–Tyr429. Short sequence motifs (wxxxF/Y motif) lie at residues Trp348 to Tyr352, Trp362 to Phe366, Trp378 to Phe382, Trp396 to Phe400, Trp408 to Phe412, and Trp425 to Tyr429. The interval Ala392–Val417 is amphipathic helix 4 (AH4). 4 TPR repeats span residues Ala491–Asn524, Ala590–Asp623, Ser625–Tyr657, and Val658–Ala691.

It belongs to the peroxisomal targeting signal receptor family. Interacts (via WxxxF/Y and LVxEF motifs) with PEX14; promoting translocation through the PEX13-PEX14 docking complex. Interacts with PEX7, promoting peroxisomal import of proteins containing a C-terminal PTS2-type peroxisomal targeting signal. Interacts with LACS7. Post-translationally, monoubiquitinated at Cys-13 by PEX2 during PEX5 passage through the retrotranslocation channel. Cys-13 monoubiquitination acts as a recognition signal for the PEX1-PEX6 complex and is required for PEX5 extraction and export from peroxisomes. When PEX5 recycling is compromised, polyubiquitinated by PEX10 during its passage through the retrotranslocation channel, leading to its degradation. Expressed in flowers, siliques, leaves and roots.

Its subcellular location is the cytoplasm. It is found in the cytosol. The protein resides in the peroxisome matrix. In terms of biological role, receptor that mediates peroxisomal import of proteins containing a C-terminal PTS1-type tripeptide peroxisomal targeting signal (SKL-type). Binds to cargo proteins containing a PTS1 peroxisomal targeting signal in the cytosol, and translocates them into the peroxisome matrix by passing through the PEX13-PEX14 docking complex along with cargo proteins. PEX5 receptor is then retrotranslocated into the cytosol, leading to release of bound cargo in the peroxisome matrix, and reset for a subsequent peroxisome import cycle. In addition to promoting peroxisomal translocation of proteins containing a PTS1 peroxisomal targeting signal, mediates peroxisomal import of proteins containing a C-terminal PTS2-type peroxisomal targeting signal via its interaction with PEX7. Interaction with PEX7 only takes place when PEX7 is associated with cargo proteins containing a PTS2 peroxisomal targeting signal. PEX7 along with PTS2-containing cargo proteins are then translocated through the PEX13-PEX14 docking complex together with PEX5. Necessary for the developmental elimination of obsolete peroxisome matrix proteins. This is Peroxisome biogenesis protein 5 (PEX5) from Arabidopsis thaliana (Mouse-ear cress).